Here is a 466-residue protein sequence, read N- to C-terminus: Adenosylhomocysteinase (466 aa).

Positions 57, 132, and 192 each coordinate substrate. 193–195 (TTT) provides a ligand contact to NAD(+). 2 residues coordinate substrate: lysine 222 and aspartate 226. Residues asparagine 227, 256 to 261 (GYGDVG), glutamate 279, asparagine 314, 335 to 337 (IGH), and asparagine 380 contribute to the NAD(+) site.

It belongs to the adenosylhomocysteinase family. The cofactor is NAD(+).

The protein localises to the cytoplasm. The enzyme catalyses S-adenosyl-L-homocysteine + H2O = L-homocysteine + adenosine. The protein operates within amino-acid biosynthesis; L-homocysteine biosynthesis; L-homocysteine from S-adenosyl-L-homocysteine: step 1/1. May play a key role in the regulation of the intracellular concentration of adenosylhomocysteine. The polypeptide is Adenosylhomocysteinase (Chromobacterium violaceum (strain ATCC 12472 / DSM 30191 / JCM 1249 / CCUG 213 / NBRC 12614 / NCIMB 9131 / NCTC 9757 / MK)).